The following is a 179-amino-acid chain: Repressor of phase 1 flagellin gene (179 aa).

Its function is as follows. Transcriptional repressor of the FliC phase-1 flagellin. In Salmonella abortus-equi, this protein is Repressor of phase 1 flagellin gene (fljA).